The primary structure comprises 87 residues: uncharacterized protein (87 aa).

Belongs to the SF3B5 family.

This is an uncharacterized protein from Arabidopsis thaliana (Mouse-ear cress).